Consider the following 400-residue polypeptide: Formate-dependent phosphoribosylglycinamide formyltransferase (400 aa).

N(1)-(5-phospho-beta-D-ribosyl)glycinamide contacts are provided by residues 22-23 (EL) and E82. ATP is bound by residues R115, K157, 162-167 (SSGKGQ), 197-200 (EGFV), and E205. The 196-residue stretch at 120 to 315 (RLAAETLGLP…EFELHARAIL (196 aa)) folds into the ATP-grasp domain. Mg(2+) is bound by residues E274 and E286. N(1)-(5-phospho-beta-D-ribosyl)glycinamide contacts are provided by residues D293, K362, and 369 to 370 (RR).

It belongs to the PurK/PurT family. In terms of assembly, homodimer.

The catalysed reaction is N(1)-(5-phospho-beta-D-ribosyl)glycinamide + formate + ATP = N(2)-formyl-N(1)-(5-phospho-beta-D-ribosyl)glycinamide + ADP + phosphate + H(+). Its pathway is purine metabolism; IMP biosynthesis via de novo pathway; N(2)-formyl-N(1)-(5-phospho-D-ribosyl)glycinamide from N(1)-(5-phospho-D-ribosyl)glycinamide (formate route): step 1/1. Involved in the de novo purine biosynthesis. Catalyzes the transfer of formate to 5-phospho-ribosyl-glycinamide (GAR), producing 5-phospho-ribosyl-N-formylglycinamide (FGAR). Formate is provided by PurU via hydrolysis of 10-formyl-tetrahydrofolate. This Mycolicibacterium gilvum (strain PYR-GCK) (Mycobacterium gilvum (strain PYR-GCK)) protein is Formate-dependent phosphoribosylglycinamide formyltransferase.